The sequence spans 551 residues: Cytochrome bc1 complex cytochrome b subunit (551 aa).

A helical transmembrane segment spans residues 44–64 (FLLGEIALYSFIVLLLTGVYL). Heme-binding residues include His-113 and His-127. The next 3 helical transmembrane spans lie at 117-137 (ALMF…TGAF), 145-165 (WVIG…GYSM), and 188-208 (VIGT…TILI). 2 residues coordinate heme: His-215 and His-230. The next 5 helical transmembrane spans lie at 216 to 236 (ILLI…LVWF), 265 to 285 (SGAF…FLQI), 334 to 354 (PVWV…YPFL), 380 to 400 (IGAM…NDII), and 417 to 437 (IGMV…CIGL). Residues 532 to 551 (ALREHQDSIASSPNGERGKH) are disordered.

It belongs to the cytochrome b family. In terms of assembly, the cytochrome bc1 complex is composed of a cytochrome b (QcrB), the Rieske iron-sulfur protein (QcrA) and a diheme cytochrome c (QcrC) subunit. Requires heme as cofactor.

It localises to the cell membrane. The catalysed reaction is a quinol + 2 Fe(III)-[cytochrome c](out) = a quinone + 2 Fe(II)-[cytochrome c](out) + 2 H(+)(out). In terms of biological role, cytochrome b subunit of the cytochrome bc1 complex, an essential component of the respiratory electron transport chain required for ATP synthesis. The bc1 complex catalyzes the oxidation of ubiquinol and the reduction of cytochrome c in the respiratory chain. The bc1 complex operates through a Q-cycle mechanism that couples electron transfer to generation of the proton gradient that drives ATP synthesis. The cytochrome b subunit contains two ubiquinol reactive sites: the oxidation (QP) site and the reduction (QN) site. The sequence is that of Cytochrome bc1 complex cytochrome b subunit (qcrB) from Mycobacterium leprae (strain TN).